A 356-amino-acid polypeptide reads, in one-letter code: MIKVAIVDDSAVVRQVLSSMLENQPDITLLGCARDPLFALKLFEQQWPDVIILDIEMPRMDGITFLKKVMAEKPTPVVICSTLTEQGASVTIAALAAGAVDIITKPKLGLKGFLEESQARLLQAIRAAAKASVAKLRVNGLAKPMPVIAKHNADVVLASTNHALNQTTDRVVALGTSTGGTHALEYVLTALPRTSAGIVVVQHMPEHFTAAFASRLNGVCEMEVKEAEDNDRVMPGLVLIANGGKHMLLQRSGAQYRVQLKDGPLVSRHRPSVDVLFRSVANAAGKNALGVIMTGMGDDGARGLLEMHQCGAITLAQDEASCVVYGMPKEAVKLGAVSRQVALDNIAEEIIAFTKQ.

The 118-residue stretch at 3–120 (KVAIVDDSAV…KGFLEESQAR (118 aa)) folds into the Response regulatory domain. 4-aspartylphosphate is present on D54. In terms of domain architecture, CheB-type methylesterase spans 165 to 356 (NQTTDRVVAL…AEEIIAFTKQ (192 aa)). Residues S177, H203, and D299 contribute to the active site.

The protein belongs to the CheB family. Phosphorylated by CheA. Phosphorylation of the N-terminal regulatory domain activates the methylesterase activity.

The protein localises to the cytoplasm. It carries out the reaction [protein]-L-glutamate 5-O-methyl ester + H2O = L-glutamyl-[protein] + methanol + H(+). It catalyses the reaction L-glutaminyl-[protein] + H2O = L-glutamyl-[protein] + NH4(+). Involved in chemotaxis. Part of a chemotaxis signal transduction system that modulates chemotaxis in response to various stimuli. Catalyzes the demethylation of specific methylglutamate residues introduced into the chemoreceptors (methyl-accepting chemotaxis proteins or MCP) by CheR. Also mediates the irreversible deamidation of specific glutamine residues to glutamic acid. In Shewanella oneidensis (strain ATCC 700550 / JCM 31522 / CIP 106686 / LMG 19005 / NCIMB 14063 / MR-1), this protein is Protein-glutamate methylesterase/protein-glutamine glutaminase 3.